Consider the following 1715-residue polypeptide: Rho guanine nucleotide exchange factor TIAM2 (1715 aa).

Composition is skewed to polar residues over residues 1–22 and 218–229; these read MGNSESQYTFQGSKNHSNTVTG and GSPSSQRPSPTD. 4 disordered regions span residues 1 to 27, 174 to 249, 263 to 294, and 385 to 418; these read MGNSESQYTFQGSKNHSNTVTGAKQKP, FHNG…WYDS, SFLAPSTPDPSLPSSFPPSDTKKPFNQSSSLS, and TGSLSRKKRKLQEPRSMEGSEYFDSHSDGLNAEG. G2 carries N-myristoyl glycine lipidation. The segment covering 235-245 has biased composition (low complexity); the sequence is SKGSSLSSESS. Over residues 395-411 the composition is skewed to basic and acidic residues; sequence LQEPRSMEGSEYFDSHS. In terms of domain architecture, PH 1 spans 504-618; it reads VVRKAGWLFF…WVTAIHSACA (115 aa). Residues 665 to 692 are a coiled coil; sequence PKNRKAIENQIRQWEQNLEKFHMDLFRM. The region spanning 831–902 is the RBD domain; that stretch reads VQTYVHFQDN…YMQEQVYDEI (72 aa). In terms of domain architecture, PDZ spans 911–997; it reads DVQLTKTGDM…GLTLVARPVT (87 aa). The tract at residues 1092–1113 is disordered; it reads THTNSMEAPTESHDPPPRPLAR. The DH domain occupies 1120–1314; the sequence is RLRKVIQELV…EKVASHINEM (195 aa). The PH 2 domain maps to 1347–1478; that stretch reads LLMHSTVSWL…KVIRSILREN (132 aa). The segment at 1515-1582 is disordered; the sequence is SLKGLRTSSS…EGLAEFPDGL (68 aa). Over residues 1522 to 1532 the composition is skewed to low complexity; it reads SSSSEWPSEPS. Over residues 1533 to 1552 the composition is skewed to polar residues; the sequence is KGNSLDSDECSLSSGTQSSG. Positions 1557 to 1572 are enriched in basic and acidic residues; the sequence is ESRRDSKSTELEKDAQ. Phosphoserine is present on S1604. T1662 carries the post-translational modification Phosphothreonine.

The protein belongs to the TIAM family. Interacts with MAP1A, MAP1B, PARP1 and YWHAE. Interacts with CD44, PARD3 and MAPK8IP2. In terms of processing, phosphorylated on serine and threonine residues. Phosphorylated on Thr-1662 by Rho-kinase. Its phosphorylation by Rho-kinase inhibits its guanine nucleotide exchange activity, its interaction with MAP1A, MAP1B, PARP1 and YWHAE and reduces its ability to promote neurite growth. As to expression, expressed in fetal brain (at protein level). Expressed in the olfactory bulb, cortical plate of the cerebral cortex, caudate putamen, hippocampus, ependymal cells of the lateral surface of the lateral ventricles of the brain. Weakly expressed in heart, lung, liver, skeletal muscle, kidney and testis.

The protein resides in the cytoplasm. Its subcellular location is the cell projection. It is found in the lamellipodium. It localises to the filopodium. The protein localises to the growth cone. The protein resides in the neuron projection. Its subcellular location is the perikaryon. Functionally, modulates the activity of RHO-like proteins and connects extracellular signals to cytoskeletal activities. Acts as a GDP-dissociation stimulator protein that stimulates the GDP-GTP exchange activity of RHO-like GTPases and activates them. Activates specifically RAC1, but not CDC42 and RHOA. Mediates extracellular laminin signals to activate Rac1, contributing to neurite growth. Involved in lamellipodial formation and advancement of the growth cone of embryonic hippocampal neurons. Promotes migration of neurons in the cerebral cortex. When overexpressed, induces membrane ruffling accompanied by the accumulation of actin filaments along the altered plasma membrane. In Mus musculus (Mouse), this protein is Rho guanine nucleotide exchange factor TIAM2.